Here is a 260-residue protein sequence, read N- to C-terminus: 3'-5' ssDNA/RNA exonuclease TatD (260 aa).

A divalent metal cation-binding residues include E92, H128, and H153.

Belongs to the metallo-dependent hydrolases superfamily. TatD-type hydrolase family. TatD subfamily. In terms of assembly, monomer. It depends on Mg(2+) as a cofactor.

It localises to the cytoplasm. Its function is as follows. 3'-5' exonuclease that prefers single-stranded DNA and RNA. May play a role in the H(2)O(2)-induced DNA damage repair. This Pectobacterium parmentieri (strain WPP163) (Pectobacterium wasabiae (strain WPP163)) protein is 3'-5' ssDNA/RNA exonuclease TatD.